We begin with the raw amino-acid sequence, 152 residues long: Ribosomal RNA large subunit methyltransferase H (152 aa).

Residues Leu-68, Gly-100, and 119-124 (LGVMTW) each bind S-adenosyl-L-methionine.

Belongs to the RNA methyltransferase RlmH family. As to quaternary structure, homodimer.

It localises to the cytoplasm. It catalyses the reaction pseudouridine(1915) in 23S rRNA + S-adenosyl-L-methionine = N(3)-methylpseudouridine(1915) in 23S rRNA + S-adenosyl-L-homocysteine + H(+). Functionally, specifically methylates the pseudouridine at position 1915 (m3Psi1915) in 23S rRNA. The polypeptide is Ribosomal RNA large subunit methyltransferase H (Rhodospirillum rubrum (strain ATCC 11170 / ATH 1.1.1 / DSM 467 / LMG 4362 / NCIMB 8255 / S1)).